The sequence spans 601 residues: Elongation factor 4 (601 aa).

One can recognise a tr-type G domain in the interval aspartate 2 to threonine 184. GTP contacts are provided by residues aspartate 14–threonine 19 and asparagine 131–aspartate 134.

This sequence belongs to the TRAFAC class translation factor GTPase superfamily. Classic translation factor GTPase family. LepA subfamily.

The protein resides in the cell inner membrane. The enzyme catalyses GTP + H2O = GDP + phosphate + H(+). Functionally, required for accurate and efficient protein synthesis under certain stress conditions. May act as a fidelity factor of the translation reaction, by catalyzing a one-codon backward translocation of tRNAs on improperly translocated ribosomes. Back-translocation proceeds from a post-translocation (POST) complex to a pre-translocation (PRE) complex, thus giving elongation factor G a second chance to translocate the tRNAs correctly. Binds to ribosomes in a GTP-dependent manner. This is Elongation factor 4 from Polynucleobacter asymbioticus (strain DSM 18221 / CIP 109841 / QLW-P1DMWA-1) (Polynucleobacter necessarius subsp. asymbioticus).